Reading from the N-terminus, the 267-residue chain is Glutamate racemase (267 aa).

Residues aspartate 10–serine 11 and tyrosine 42–glycine 43 contribute to the substrate site. Cysteine 73 serves as the catalytic Proton donor/acceptor. Asparagine 74–threonine 75 serves as a coordination point for substrate. Cysteine 183 (proton donor/acceptor) is an active-site residue. Threonine 184–histidine 185 is a binding site for substrate.

This sequence belongs to the aspartate/glutamate racemases family.

The catalysed reaction is L-glutamate = D-glutamate. The protein operates within cell wall biogenesis; peptidoglycan biosynthesis. In terms of biological role, provides the (R)-glutamate required for cell wall biosynthesis. The sequence is that of Glutamate racemase from Lactobacillus helveticus (strain DPC 4571).